Consider the following 166-residue polypeptide: CDP-archaeol synthase (166 aa).

4 helical membrane passes run 42 to 62, 73 to 93, 104 to 124, and 128 to 148; these read FFGG…AATA, FLSV…KSFL, SWFL…ILIF, and WLFG…TPLL.

It belongs to the CDP-archaeol synthase family. Mg(2+) is required as a cofactor.

It localises to the cell membrane. It carries out the reaction 2,3-bis-O-(geranylgeranyl)-sn-glycerol 1-phosphate + CTP + H(+) = CDP-2,3-bis-O-(geranylgeranyl)-sn-glycerol + diphosphate. Its pathway is membrane lipid metabolism; glycerophospholipid metabolism. Its function is as follows. Catalyzes the formation of CDP-2,3-bis-(O-geranylgeranyl)-sn-glycerol (CDP-archaeol) from 2,3-bis-(O-geranylgeranyl)-sn-glycerol 1-phosphate (DGGGP) and CTP. This reaction is the third ether-bond-formation step in the biosynthesis of archaeal membrane lipids. The protein is CDP-archaeol synthase of Methanoculleus marisnigri (strain ATCC 35101 / DSM 1498 / JR1).